The primary structure comprises 98 residues: Large ribosomal subunit protein uL23 (98 aa).

It belongs to the universal ribosomal protein uL23 family. Part of the 50S ribosomal subunit. Contacts protein L29, and trigger factor when it is bound to the ribosome.

One of the early assembly proteins it binds 23S rRNA. One of the proteins that surrounds the polypeptide exit tunnel on the outside of the ribosome. Forms the main docking site for trigger factor binding to the ribosome. The sequence is that of Large ribosomal subunit protein uL23 from Maricaulis maris (strain MCS10) (Caulobacter maris).